Consider the following 445-residue polypeptide: tRNA-2-methylthio-N(6)-dimethylallyladenosine synthase (445 aa).

The MTTase N-terminal domain occupies 13 to 129; it reads KKLFIKTYGC…LPAMARAGRG (117 aa). [4Fe-4S] cluster contacts are provided by Cys22, Cys58, Cys92, Cys163, Cys167, and Cys170. The region spanning 149–383 is the Radical SAM core domain; sequence TRRAPAAFLT…LTSQQKAAQE (235 aa). Residues 383–445 form the TRAM domain; it reads EGMVGRELGV…PNSLAGVLAA (63 aa).

Belongs to the methylthiotransferase family. MiaB subfamily. As to quaternary structure, monomer. Requires [4Fe-4S] cluster as cofactor.

It is found in the cytoplasm. The enzyme catalyses N(6)-dimethylallyladenosine(37) in tRNA + (sulfur carrier)-SH + AH2 + 2 S-adenosyl-L-methionine = 2-methylsulfanyl-N(6)-dimethylallyladenosine(37) in tRNA + (sulfur carrier)-H + 5'-deoxyadenosine + L-methionine + A + S-adenosyl-L-homocysteine + 2 H(+). Catalyzes the methylthiolation of N6-(dimethylallyl)adenosine (i(6)A), leading to the formation of 2-methylthio-N6-(dimethylallyl)adenosine (ms(2)i(6)A) at position 37 in tRNAs that read codons beginning with uridine. This chain is tRNA-2-methylthio-N(6)-dimethylallyladenosine synthase, found in Paracoccus denitrificans (strain Pd 1222).